The chain runs to 47 residues: Delta-actitoxin-Axm1d (47 aa).

3 disulfides stabilise this stretch: cysteine 4–cysteine 44, cysteine 6–cysteine 34, and cysteine 27–cysteine 45.

The protein belongs to the sea anemone sodium channel inhibitory toxin family. Type I subfamily.

The protein localises to the secreted. It localises to the nematocyst. Functionally, binds specifically to voltage-gated sodium channels (Nav), thereby delaying their inactivation during signal transduction. Thus it strongly stimulates mammalian cardiac muscle contraction. The protein is Delta-actitoxin-Axm1d of Anthopleura xanthogrammica (Giant green sea anemone).